The chain runs to 234 residues: Coiled-coil domain-containing protein 194 (234 aa).

The signal sequence occupies residues 1-43 (MAEPGPEPGRAWRLLALCGAAVFLAAAAAGGALVAWNLAASTA). The tract at residues 44-63 (RSPRCPEPEQMNATVRPPDS) is disordered. Residues 67-171 (VEELRRRLAE…LQRAGAAEAA (105 aa)) adopt a coiled-coil conformation. Positions 194–234 (GTLRKESRLRPRSGSRTKPSISHRPKSGSTKGCRRPPRDPQ) are disordered. A compositionally biased stretch (basic residues) spans 203–219 (RPRSGSRTKPSISHRPK).

The protein is Coiled-coil domain-containing protein 194 of Mus musculus (Mouse).